The chain runs to 220 residues: Deoxyribose-phosphate aldolase 2 (220 aa).

D89 functions as the Proton donor/acceptor in the catalytic mechanism. K151 (schiff-base intermediate with acetaldehyde) is an active-site residue. Catalysis depends on K180, which acts as the Proton donor/acceptor.

This sequence belongs to the DeoC/FbaB aldolase family. DeoC type 1 subfamily.

It localises to the cytoplasm. It catalyses the reaction 2-deoxy-D-ribose 5-phosphate = D-glyceraldehyde 3-phosphate + acetaldehyde. The protein operates within carbohydrate degradation; 2-deoxy-D-ribose 1-phosphate degradation; D-glyceraldehyde 3-phosphate and acetaldehyde from 2-deoxy-alpha-D-ribose 1-phosphate: step 2/2. Its function is as follows. Catalyzes a reversible aldol reaction between acetaldehyde and D-glyceraldehyde 3-phosphate to generate 2-deoxy-D-ribose 5-phosphate. This Staphylococcus aureus (strain COL) protein is Deoxyribose-phosphate aldolase 2.